A 90-amino-acid chain; its full sequence is Acylphosphatase (90 aa).

The Acylphosphatase-like domain maps to glutamine 3–tyrosine 90. Active-site residues include arginine 18 and asparagine 36.

This sequence belongs to the acylphosphatase family.

It carries out the reaction an acyl phosphate + H2O = a carboxylate + phosphate + H(+). This Bacillus licheniformis (strain ATCC 14580 / DSM 13 / JCM 2505 / CCUG 7422 / NBRC 12200 / NCIMB 9375 / NCTC 10341 / NRRL NRS-1264 / Gibson 46) protein is Acylphosphatase (acyP).